The primary structure comprises 471 residues: MEQQSLKVVIVGGSIAGLTLAHCLHRANIDHVVLEKRAEIAPQEGASIGIWPNGARMLEQLGLYGELEKLTEPLNLMHIAFPDGFSFEDLLPTTINQRFGYPIIFLDRQKFLETLYRKYPDKSKIVTNTRVAEVQSSEKCARVITEDGTMYEGDIVVGADGVHSLVRREMWKLGDSKQPGSVPSREKTGMTVEYSCVYGISSPIVGLRAGESVNSYMDGMTVLTFHGKGGRVYWFLIQKLHQKYTYPNTPRYTVEDAERLCTDHRDTTIWKDIRIGHLWDNREVVSMTALEENLFAKWHFHRIGLMGDSIHKMTPNIGQGANSAIEDAAVFSSLLVHMMTSEGPGRPSSARIQRLLHDYQACRYERAEMIYHRSRFGARFQSRDDAVKLIVGRYVVPRIRNRLANISSMLIANGEIIQYLPFPKRSGPGWEKFRNKGEWMPYTPFALFSAILLVQHVVPLLGLTSPLLLAS.

The FAD site is built by Glu-35, Gly-49, and Arg-108. The active site involves Tyr-216. The FAD site is built by Asp-308 and Ala-321. The next 2 helical transmembrane spans lie at 403–423 (LANI…LPFP) and 443–463 (TPFA…LLGL).

Belongs to the paxM FAD-dependent monooxygenase family. FAD serves as cofactor.

The protein resides in the membrane. It functions in the pathway secondary metabolite biosynthesis; terpenoid biosynthesis. FAD-dependent monooxygenase; part of the gene cluster that mediates the biosynthesis of anditomin, a fungal meroterpenoid. The first step of the pathway is the synthesis of 3,5-dimethylorsellinic acid (DMOA) by the polyketide synthase andM. DMOA is then converted to the phthalide compound 5,7-dihydroxy-4,6-dimethylphthalide (DHDMP) by the cytochrome P450 monooxygenase andK, which is further prenylated by the prenyltransferase andD to yield farnesyl-DHDMP. Further epoxidation by the FAD-dependent monooxygenase andE leads to epoxyfarnesyl-DHDMP. The next step involves the terpene cyclase andB that converts epoxyfarnesyl-DHDMP into preandiloid A through opening of the epoxide ring followed by the cyclization of the farnesyl moiety. Preandiloid A is in turn oxidized at the C-3 hydroxyl group to yield preandiloid B by the dehydrogenase andC. The dioxygenase andA is solely responsible for the dehydrogenation of preandiloid B leading to the enone preandiloid C, as well as for the intriguing structural rearrangement to generate the bicyclo[2.2.2]octane core, transforming preandiloid C into andiconin. FAD-binding monooxygenase andJ then produces andilesin D which is reduced by dehydrogenase andI to yield andilesin A. Action of acetyltransferase andG followed by a spontaneous acetate elimination leads then to andilesin B, which is in turn substrate of the short chain dehydrogenase andH to yield andilesin C. Finally, the dioxygenase andF catalyzes the transformation of andilesin C to anditomin. This is FAD-dependent monooxygenase andE from Emericella variicolor (Aspergillus stellatus).